The chain runs to 290 residues: 2-dehydro-3-deoxy-phosphogluconate/2-dehydro-3-deoxy-6-phosphogalactonate aldolase (290 aa).

Residues 42-43, 129-131, and 155-157 contribute to the substrate site; these read TT, YNY, and KDT. Catalysis depends on Lys-155, which acts as the Schiff-base intermediate with substrate.

This sequence belongs to the DapA family. KDPG aldolase subfamily. Homotetramer; dimer of dimers.

It carries out the reaction 2-dehydro-3-deoxy-6-phospho-D-gluconate = D-glyceraldehyde 3-phosphate + pyruvate. It catalyses the reaction 2-dehydro-3-deoxy-6-phospho-D-galactonate = D-glyceraldehyde 3-phosphate + pyruvate. Its pathway is carbohydrate acid metabolism; 2-dehydro-3-deoxy-D-gluconate degradation; D-glyceraldehyde 3-phosphate and pyruvate from 2-dehydro-3-deoxy-D-gluconate: step 2/2. Its function is as follows. Involved in the degradation of glucose and galactose via the Entner-Doudoroff pathway. Catalyzes the reversible cleavage of 2-keto-3-deoxy-6-phosphogluconate (KDPG) and 2-keto-3-deoxygluconate (KDG) forming pyruvate and glyceraldehyde 3-phosphate or glyceraldehyde, respectively. It is also able to catalyze the reversible cleavage of 2-keto-3-deoxy-6-phosphogalactonate (KDPGal) and 2-keto-3-deoxygalactonate (KDGal). This is 2-dehydro-3-deoxy-phosphogluconate/2-dehydro-3-deoxy-6-phosphogalactonate aldolase (kdgA) from Sulfurisphaera tokodaii (strain DSM 16993 / JCM 10545 / NBRC 100140 / 7) (Sulfolobus tokodaii).